Consider the following 345-residue polypeptide: OVARIAN TUMOR DOMAIN-containing deubiquitinating enzyme 9 (345 aa).

An OTU domain is found at 204–328 (LVENKIEGDG…EVHYNSIYPE (125 aa)). The active site involves Asp212. Cys215 serves as the catalytic Nucleophile. Residue His321 is part of the active site.

It belongs to the peptidase C85 family.

It catalyses the reaction Thiol-dependent hydrolysis of ester, thioester, amide, peptide and isopeptide bonds formed by the C-terminal Gly of ubiquitin (a 76-residue protein attached to proteins as an intracellular targeting signal).. Hydrolase that can remove conjugated ubiquitin from proteins in vitro and may therefore play an important regulatory role at the level of protein turnover by preventing degradation. Cysteine protease with a preference for 'Lys-63' and 'Lys-48' -linked ubiquitin (UB) tetramers as substrates. Also cleaves RUB-GST fusion. The chain is OVARIAN TUMOR DOMAIN-containing deubiquitinating enzyme 9 from Arabidopsis thaliana (Mouse-ear cress).